The primary structure comprises 485 residues: NADH-quinone oxidoreductase subunit N (485 aa).

A run of 14 helical transmembrane segments spans residues 8–28 (LIAL…MLCI), 35–55 (FVNA…LYFV), 75–95 (FYTG…YPWL), 105–125 (FYLL…ANHL), 127–147 (SLFI…GYAF), 159–179 (YMLL…LIYA), 203–223 (LLAG…LVPF), 235–255 (PAPV…GAVM), 271–291 (IVLS…AVSQ), 297–317 (LLGY…IAVQ), 326–346 (VGVY…VVSL), 374–394 (AVMT…GFFG), 407–426 (LWWL…YYYL), and 449–469 (ALTA…FFGL).

It belongs to the complex I subunit 2 family. In terms of assembly, NDH-1 is composed of 13 different subunits. Subunits NuoA, H, J, K, L, M, N constitute the membrane sector of the complex.

The protein resides in the cell inner membrane. It carries out the reaction a quinone + NADH + 5 H(+)(in) = a quinol + NAD(+) + 4 H(+)(out). Its function is as follows. NDH-1 shuttles electrons from NADH, via FMN and iron-sulfur (Fe-S) centers, to quinones in the respiratory chain. The immediate electron acceptor for the enzyme in this species is believed to be ubiquinone. Couples the redox reaction to proton translocation (for every two electrons transferred, four hydrogen ions are translocated across the cytoplasmic membrane), and thus conserves the redox energy in a proton gradient. The sequence is that of NADH-quinone oxidoreductase subunit N from Pectobacterium atrosepticum (strain SCRI 1043 / ATCC BAA-672) (Erwinia carotovora subsp. atroseptica).